The primary structure comprises 687 residues: Polyphosphate kinase (687 aa).

Residue Asn-45 coordinates ATP. Mg(2+) contacts are provided by Arg-375 and Arg-405. His-435 functions as the Phosphohistidine intermediate in the catalytic mechanism. ATP-binding residues include Tyr-472, Arg-568, and His-596.

This sequence belongs to the polyphosphate kinase 1 (PPK1) family. Requires Mg(2+) as cofactor. In terms of processing, an intermediate of this reaction is the autophosphorylated ppk in which a phosphate is covalently linked to a histidine residue through a N-P bond.

It carries out the reaction [phosphate](n) + ATP = [phosphate](n+1) + ADP. Functionally, catalyzes the reversible transfer of the terminal phosphate of ATP to form a long-chain polyphosphate (polyP). The polypeptide is Polyphosphate kinase (Burkholderia ambifaria (strain MC40-6)).